Reading from the N-terminus, the 142-residue chain is Large ribosomal subunit protein uL16 (142 aa).

It belongs to the universal ribosomal protein uL16 family. As to quaternary structure, part of the 50S ribosomal subunit.

In terms of biological role, binds 23S rRNA and is also seen to make contacts with the A and possibly P site tRNAs. This is Large ribosomal subunit protein uL16 from Mycoplasmopsis pulmonis (strain UAB CTIP) (Mycoplasma pulmonis).